The chain runs to 203 residues: Proline-rich protein 1 (203 aa).

The N-terminal stretch at 1–20 (MMKLGLYLTLLFLSVWTVSG) is a signal peptide.

Component of the acid-insoluble and acid-soluble organic matrix of calcified layers of the shell (at protein level).

It localises to the secreted. The polypeptide is Proline-rich protein 1 (Lottia gigantea (Giant owl limpet)).